The chain runs to 293 residues: Ribosomal RNA small subunit methyltransferase H (293 aa).

S-adenosyl-L-methionine contacts are provided by residues 34 to 36 (GGH), Asp-54, Leu-86, Asp-101, and Gln-108.

This sequence belongs to the methyltransferase superfamily. RsmH family.

Its subcellular location is the cytoplasm. It catalyses the reaction cytidine(1402) in 16S rRNA + S-adenosyl-L-methionine = N(4)-methylcytidine(1402) in 16S rRNA + S-adenosyl-L-homocysteine + H(+). Its function is as follows. Specifically methylates the N4 position of cytidine in position 1402 (C1402) of 16S rRNA. In Elusimicrobium minutum (strain Pei191), this protein is Ribosomal RNA small subunit methyltransferase H.